A 389-amino-acid polypeptide reads, in one-letter code: Na(+)/H(+) antiporter NhaA 1 (389 aa).

11 consecutive transmembrane segments (helical) span residues 12–32, 62–82, 97–117, 128–148, 157–177, 184–204, 220–240, 260–280, 282–302, 331–351, and 365–385; these read VLNEAFGGVLLIVCTLLALLV, FLLWINDGLISIFFFAIGLEL, IVLPFMAALGGILIPAMLFAL, GWAIPTATDTAFALAILMMCG, IFLLSLAIFDDVGAILIIAIF, IVAFVVAGLAILAMLILNLLG, ISVLKSGVHATLAGIVTAFFI, FWIAFIILPLFAFANAGVNLS, IDIGAIFSGVSIGIFLGLFVG, LYGVCILTGIGFTMSLFIDGL, and LAILIASFCSGIWGFIYLKFF.

Belongs to the NhaA Na(+)/H(+) (TC 2.A.33) antiporter family.

Its subcellular location is the cell inner membrane. The enzyme catalyses Na(+)(in) + 2 H(+)(out) = Na(+)(out) + 2 H(+)(in). Na(+)/H(+) antiporter that extrudes sodium in exchange for external protons. This Campylobacter jejuni (strain RM1221) protein is Na(+)/H(+) antiporter NhaA 1.